Here is a 322-residue protein sequence, read N- to C-terminus: MGMLARVALGLIIIDAVLAAPTTELFNYDSEVYDAILEDTGTFYNYEHIPDNHVENEKVSERLSGNRELLTPGPQLGDNQDEDKDEESTPRLIDGSSPQEPEFPGLLGPHTNEDFPTCLLCTCISTTVYCDDHELDAIPPLPKKTTYFYSRFNRIKKINKNDFASLNDLKRIDLTSNLISEIDEDAFRKLPHLQELVLRDNKIKQLPELPNTLTFIDISNNRLGRKGIKQEAFKDMYDLHHLYITDNSLDHIPLPLPESLRALHLQNNDILEMHEDTFCNVKNLTYVRKALEDIRLDGNPINLSRTPQAYMCLPRLPIGSFI.

An N-terminal signal peptide occupies residues 1–19 (MGMLARVALGLIIIDAVLA). Positions 58–108 (KVSERLSGNRELLTPGPQLGDNQDEDKDEESTPRLIDGSSPQEPEFPGLLG) are disordered. O-linked (Xyl...) (dermatan sulfate) serine glycosylation occurs at S64. O-linked (GalNAc...) serine glycosylation occurs at S96. The region spanning 106 to 143 (LLGPHTNEDFPTCLLCTCISTTVYCDDHELDAIPPLPK) is the LRRNT domain. C118 and C130 form a disulfide bridge. LRR repeat units follow at residues 144-165 (KTTYFYSRFNRIKKINKNDFAS), 168-189 (DLKRIDLTSNLISEIDEDAFRK), 192-213 (HLQELVLRDNKIKQLPELPNTL), 238-258 (DLHHLYITDNSLDHIPLPLPE), and 259-280 (SLRALHLQNNDILEMHEDTFCN). A disulfide bridge links C279 with C312. N-linked (GlcNAc...) asparagine glycosylation is found at N283 and N302. One copy of the LRR 6 repeat lies at 290-310 (ALEDIRLDGNPINLSRTPQAY).

This sequence belongs to the small leucine-rich proteoglycan (SLRP) family. SLRP class III subfamily. Post-translationally, the O-linked polysaccharide on Ser-96 is probably the mucin type linked to GalNAc. There is one glycosaminoglycan chain, known to be dermatan sulfate, and it is probably the O-glycosylation at Ser-64. Confined to the middle zone of embryonic epiphyseal cartilage consisting of flattened chondrocytes and the ossifying region in the limb buds of chick embryos. Has also been detected in testis.

The protein localises to the secreted. It is found in the extracellular space. It localises to the extracellular matrix. Its function is as follows. May have a role in bone formation and also in establishing the ordered structure of cartilage through matrix organization. The sequence is that of Epiphycan (Epyc) from Mus musculus (Mouse).